Consider the following 496-residue polypeptide: Glutamyl-tRNA(Gln) amidotransferase subunit A (496 aa).

Residues Lys-75 and Ser-150 each act as charge relay system in the active site. The Acyl-ester intermediate role is filled by Ser-174.

This sequence belongs to the amidase family. GatA subfamily. In terms of assembly, heterotrimer of A, B and C subunits.

The catalysed reaction is L-glutamyl-tRNA(Gln) + L-glutamine + ATP + H2O = L-glutaminyl-tRNA(Gln) + L-glutamate + ADP + phosphate + H(+). Allows the formation of correctly charged Gln-tRNA(Gln) through the transamidation of misacylated Glu-tRNA(Gln) in organisms which lack glutaminyl-tRNA synthetase. The reaction takes place in the presence of glutamine and ATP through an activated gamma-phospho-Glu-tRNA(Gln). This Burkholderia thailandensis (strain ATCC 700388 / DSM 13276 / CCUG 48851 / CIP 106301 / E264) protein is Glutamyl-tRNA(Gln) amidotransferase subunit A.